Reading from the N-terminus, the 157-residue chain is SsrA-binding protein (157 aa).

The protein belongs to the SmpB family.

The protein resides in the cytoplasm. Its function is as follows. Required for rescue of stalled ribosomes mediated by trans-translation. Binds to transfer-messenger RNA (tmRNA), required for stable association of tmRNA with ribosomes. tmRNA and SmpB together mimic tRNA shape, replacing the anticodon stem-loop with SmpB. tmRNA is encoded by the ssrA gene; the 2 termini fold to resemble tRNA(Ala) and it encodes a 'tag peptide', a short internal open reading frame. During trans-translation Ala-aminoacylated tmRNA acts like a tRNA, entering the A-site of stalled ribosomes, displacing the stalled mRNA. The ribosome then switches to translate the ORF on the tmRNA; the nascent peptide is terminated with the 'tag peptide' encoded by the tmRNA and targeted for degradation. The ribosome is freed to recommence translation, which seems to be the essential function of trans-translation. The chain is SsrA-binding protein from Limosilactobacillus fermentum (strain NBRC 3956 / LMG 18251) (Lactobacillus fermentum).